A 143-amino-acid polypeptide reads, in one-letter code: Large ribosomal subunit protein bL17 (143 aa).

Belongs to the bacterial ribosomal protein bL17 family. As to quaternary structure, part of the 50S ribosomal subunit. Contacts protein L32.

The protein is Large ribosomal subunit protein bL17 of Bartonella quintana (strain Toulouse) (Rochalimaea quintana).